The primary structure comprises 446 residues: CBL-interacting serine/threonine-protein kinase 24 (446 aa).

Residues 11–264 (YEVGRTIGEG…IQGIKKDPWF (254 aa)) form the Protein kinase domain. Residues 17–25 (IGEGTFAKV) and Lys-40 contribute to the ATP site. The Proton acceptor role is filled by Asp-134. The tract at residues 152 to 179 (DFGLSALPQEGVELLRTTCGTPNYVAPE) is activation loop. Position 156 is a phosphoserine (Ser-156). Thr-168 is modified (phosphothreonine). An NAF domain is found at 305–329 (EGPLMMNAFEMITLSQGLNLSALFD). The interval 336–365 (KRQTRFVSRREPSEIIANIEAVANSMGFKS) is PPI.

It belongs to the protein kinase superfamily. CAMK Ser/Thr protein kinase family. SNF1 subfamily. As to quaternary structure, interacts with CBL1, CBL2, CBL4/SOS3, CBL5, CBL9, CBL10 and with the protein phosphatase 2C ABI2. Mn(2+) is required as a cofactor. Autophosphorylated.

The protein localises to the cytoplasm. It localises to the nucleus. The catalysed reaction is L-seryl-[protein] + ATP = O-phospho-L-seryl-[protein] + ADP + H(+). It carries out the reaction L-threonyl-[protein] + ATP = O-phospho-L-threonyl-[protein] + ADP + H(+). In terms of biological role, involved in the regulatory pathway for the control of intracellular Na(+) and K(+) homeostasis and salt tolerance. Activates the vacuolar H(+)/Ca(2+) antiporter CAX1 and operates in synergy with CBL4/SOS3 to activate the plasma membrane Na(+)/H(+) antiporter SOS1. CIPK serine-threonine protein kinases interact with CBL proteins. Binding of a CBL protein to the regulatory NAF domain of CIPK protein lead to the activation of the kinase in a calcium-dependent manner. Phosphorylates CBL1, CBL4 and CBL10. The polypeptide is CBL-interacting serine/threonine-protein kinase 24 (CIPK24) (Arabidopsis thaliana (Mouse-ear cress)).